We begin with the raw amino-acid sequence, 389 residues long: Lipid-A-disaccharide synthase (389 aa).

The protein belongs to the LpxB family.

It carries out the reaction a lipid X + a UDP-2-N,3-O-bis[(3R)-3-hydroxyacyl]-alpha-D-glucosamine = a lipid A disaccharide + UDP + H(+). The protein operates within bacterial outer membrane biogenesis; LPS lipid A biosynthesis. In terms of biological role, condensation of UDP-2,3-diacylglucosamine and 2,3-diacylglucosamine-1-phosphate to form lipid A disaccharide, a precursor of lipid A, a phosphorylated glycolipid that anchors the lipopolysaccharide to the outer membrane of the cell. The protein is Lipid-A-disaccharide synthase of Burkholderia ambifaria (strain ATCC BAA-244 / DSM 16087 / CCUG 44356 / LMG 19182 / AMMD) (Burkholderia cepacia (strain AMMD)).